Consider the following 83-residue polypeptide: Putative defensin-like protein 131 (83 aa).

The first 34 residues, 1 to 34 (MAKNRVLTIFYCTIYYCICFKYVLLGMVVEKTQG), serve as a signal peptide directing secretion. 4 disulfide bridges follow: Cys-37–Cys-83, Cys-46–Cys-65, Cys-51–Cys-77, and Cys-55–Cys-79.

Belongs to the DEFL family.

Its subcellular location is the secreted. This Arabidopsis thaliana (Mouse-ear cress) protein is Putative defensin-like protein 131 (LCR29).